The primary structure comprises 910 residues: Leucine--tRNA ligase (910 aa).

The short motif at proline 42 to histidine 52 is the 'HIGH' region element. Residues threonine 658–serine 662 carry the 'KMSKS' region motif. Lysine 661 is an ATP binding site.

It belongs to the class-I aminoacyl-tRNA synthetase family.

It localises to the cytoplasm. It catalyses the reaction tRNA(Leu) + L-leucine + ATP = L-leucyl-tRNA(Leu) + AMP + diphosphate. In Acidovorax ebreus (strain TPSY) (Diaphorobacter sp. (strain TPSY)), this protein is Leucine--tRNA ligase.